A 368-amino-acid polypeptide reads, in one-letter code: uncharacterized protein (368 aa).

The interval 237–287 (ESLSIPSRRRPSSIAPIGTRPSRKEIAFSNSSTPTDQTLRPPNPPAANGNA) is disordered. The segment covering 238–253 (SLSIPSRRRPSSIAPI) has biased composition (low complexity). The segment covering 264–276 (FSNSSTPTDQTLR) has biased composition (polar residues).

This is an uncharacterized protein from Schizosaccharomyces pombe (strain 972 / ATCC 24843) (Fission yeast).